Here is a 65-residue protein sequence, read N- to C-terminus: Large ribosomal subunit protein bL35 (65 aa).

The disordered stretch occupies residues 1–23; the sequence is MPKMKTHRGAAKRFKKTGTGKLK.

It belongs to the bacterial ribosomal protein bL35 family.

This Clostridium perfringens (strain ATCC 13124 / DSM 756 / JCM 1290 / NCIMB 6125 / NCTC 8237 / Type A) protein is Large ribosomal subunit protein bL35.